The primary structure comprises 237 residues: MQKKSIELKSNNFTLLVLYLNNQNIDLINQSLYKKIQECPKFFKNAPIIVNVSKLCNTVDWKKIKKIIISHGFFVVGVSGCQDGILKKNIIDSGLPILSERKNNKSNIITNFFINSYKNKKKETINKVEKTHIIDIPVRSGQKIYAKHADLIVINNVSAGAELVADGNIHVYGIVRGRVLAGANGDTSRKIFCTGLFAELVSISGEYWLSDQIPSEFIGKSAQIYLKNKFLTINSLS.

The protein belongs to the MinC family. In terms of assembly, interacts with MinD and FtsZ.

Cell division inhibitor that blocks the formation of polar Z ring septums. Rapidly oscillates between the poles of the cell to destabilize FtsZ filaments that have formed before they mature into polar Z rings. Prevents FtsZ polymerization. The sequence is that of Probable septum site-determining protein MinC from Buchnera aphidicola subsp. Acyrthosiphon pisum (strain 5A).